Here is a 709-residue protein sequence, read N- to C-terminus: Copper amine oxidase vicK1 (709 aa).

The first 20 residues, 1-20 (MKLFLLFTLTLVNIFSVSLQ), serve as a signal peptide directing secretion. Asp-365 serves as the catalytic Proton acceptor. The cysteines at positions 383 and 408 are disulfide-linked. Residue Tyr-448 is the Schiff-base intermediate with substrate; via topaquinone of the active site. Residue Tyr-448 is modified to 2',4',5'-topaquinone. Residues His-496 and His-498 each contribute to the Cu cation site. Residues Asp-505, Leu-506, Asp-507, Glu-548, Phe-641, Glu-645, Asp-651, and Leu-652 each contribute to the Ca(2+) site. Residue His-662 coordinates Cu cation.

Belongs to the copper/topaquinone oxidase family. As to quaternary structure, homodimer; disulfide-linked. Cu cation is required as a cofactor. Requires Ca(2+) as cofactor. It depends on L-topaquinone as a cofactor. In terms of processing, topaquinone (TPQ) is generated by copper-dependent autoxidation of a specific tyrosyl residue.

The protein operates within mycotoxin biosynthesis. Copper amine oxidase, part of the gene cluster that mediates the biosynthesis of the secondary metabolite victorin, the molecular basis for Victoria blight of oats. Within the pathway, vicK1 catalyzes the oxidative deamination of the N-terminal glycyl moiety of the hexapeptides in order to produce the active glyoxylate form victorins. The pathway starts with the processing of the precursor vicA1 by several endopeptidases including kexin proteases as well as the cluster-specific S28 family peptidases vicPa and vicPb to produce 7 identical copies of the hexapeptide Gly-Leu-Lys-Leu-Ala-Phe. After being excised from the precursor peptide, the core peptides are cyclized and modified post-translationally by enzymes encoded within the gene cluster. The ustYa family oxidase vicYb is required for the formation of the macrocycle in victorin and the copper amine oxidases (CAOs) vicK1 and vicK2 are responsible for converting victorin to the active form by oxidizing the N-terminal glycyl residue in the peptides to glyoxylate. Relaxed substrate specificity of enzymes in the victorin biosynthetic pathway results in a metabolic grid that produces a set of analogs including victorinines B, C, E or HV-toxin M. The chain is Copper amine oxidase vicK1 from Bipolaris victoriae (strain FI3) (Victoria blight of oats agent).